We begin with the raw amino-acid sequence, 237 residues long: Phosphoribosylaminoimidazole-succinocarboxamide synthase (237 aa).

Belongs to the SAICAR synthetase family.

It carries out the reaction 5-amino-1-(5-phospho-D-ribosyl)imidazole-4-carboxylate + L-aspartate + ATP = (2S)-2-[5-amino-1-(5-phospho-beta-D-ribosyl)imidazole-4-carboxamido]succinate + ADP + phosphate + 2 H(+). It functions in the pathway purine metabolism; IMP biosynthesis via de novo pathway; 5-amino-1-(5-phospho-D-ribosyl)imidazole-4-carboxamide from 5-amino-1-(5-phospho-D-ribosyl)imidazole-4-carboxylate: step 1/2. The chain is Phosphoribosylaminoimidazole-succinocarboxamide synthase from Enterococcus faecalis (strain ATCC 700802 / V583).